The chain runs to 97 residues: Small ribosomal subunit protein uS19 (97 aa).

The interval 74-97 is disordered; it reads FSPTRRFGGHPDKKAVKGKIEKQG. Residues 82 to 97 show a composition bias toward basic and acidic residues; it reads GHPDKKAVKGKIEKQG.

Belongs to the universal ribosomal protein uS19 family.

Protein S19 forms a complex with S13 that binds strongly to the 16S ribosomal RNA. This Petrotoga mobilis (strain DSM 10674 / SJ95) protein is Small ribosomal subunit protein uS19.